The sequence spans 108 residues: uncharacterized protein (108 aa).

The next 3 membrane-spanning stretches (helical) occupy residues 24 to 44 (LWITLVLTLFFTIVEIVGGLL), 55 to 75 (AHMASDVLALGLSMIALYLAM), and 88 to 108 (RFEIITSFLNGLTLAIISIGI).

This sequence to cation A.eutrophus efflux system protein CzcD.

Its subcellular location is the cell membrane. This is an uncharacterized protein from Geobacillus stearothermophilus (Bacillus stearothermophilus).